The chain runs to 103 residues: MILFKNLVFLPSILIGYISIRVSLLVWVNWVLVWSSCFQVAFIFSLWYFILSIYTFFYSKKIKQIISYEPSYFVFSYRAIDLCPERVLLYFFCIFNNVVFPML.

The next 2 membrane-spanning stretches (helical) occupy residues 9-33 and 40-57; these read FLPS…WVLV and VAFI…YTFF.

The protein resides in the membrane. In terms of biological role, identified in a screen for mutants with decreased levels of rDNA transcription. This is Regulator of rDNA transcription protein 1 (RRT1) from Saccharomyces cerevisiae (strain ATCC 204508 / S288c) (Baker's yeast).